A 95-amino-acid polypeptide reads, in one-letter code: Virion membrane protein OPG135 (95 aa).

An N-terminal signal peptide occupies residues 1–22; the sequence is MSCYTAILKSVGGLALFQDANG. At 23-45 the chain is on the intravirion side; sequence AIDLCRHFFMYFCEQKLRPNSFW. The chain crosses the membrane as a helical span at residues 46–66; sequence FVVVRAIASMIMYLVLGIALL. Topologically, residues 67–83 are virion surface; sequence YISEQDDKKNTNNASNS. Residues 76-95 form a disordered region; that stretch reads NTNNASNSNKLNESSINSNS. Positions 77–95 are enriched in low complexity; sequence TNNASNSNKLNESSINSNS. Residues Asn-79 and Asn-87 are each glycosylated (N-linked (GlcNAc...) asparagine; by host).

Belongs to the oerthopoxvirus OPG135 family.

The protein resides in the virion membrane. It is found in the host cytoplasm. Envelope protein. Required for an early step in virion morphogenesis. This chain is Virion membrane protein OPG135 (OPG135), found in Homo sapiens (Human).